The chain runs to 523 residues: Putative UDP-glucuronosyltransferase ugt-50 (523 aa).

An N-terminal signal peptide occupies residues 1–25; it reads MHYSQMRWMFFCLTALLHGSFIVNA. N-linked (GlcNAc...) asparagine glycosylation is found at Asn84, Asn248, Asn283, and Asn487. Residues 490–508 form a helical membrane-spanning segment; that stretch reads IIEHNHLDLFFYLCIISLL.

Belongs to the UDP-glycosyltransferase family.

Its subcellular location is the membrane. It catalyses the reaction glucuronate acceptor + UDP-alpha-D-glucuronate = acceptor beta-D-glucuronoside + UDP + H(+). In Caenorhabditis elegans, this protein is Putative UDP-glucuronosyltransferase ugt-50 (ugt-50).